Consider the following 137-residue polypeptide: Large ribosomal subunit protein eL28 (137 aa).

Ser-2 is modified (N-acetylserine). Residues Lys-58 and Lys-65 each participate in a glycyl lysine isopeptide (Lys-Gly) (interchain with G-Cter in SUMO2) cross-link. At Ser-115 the chain carries Phosphoserine.

The protein belongs to the eukaryotic ribosomal protein eL28 family. Component of the large ribosomal subunit.

The protein localises to the cytoplasm. Component of the large ribosomal subunit. The ribosome is a large ribonucleoprotein complex responsible for the synthesis of proteins in the cell. This is Large ribosomal subunit protein eL28 (RPL28) from Homo sapiens (Human).